Here is a 92-residue protein sequence, read N- to C-terminus: Small ribosomal subunit protein uS19 (92 aa).

This sequence belongs to the universal ribosomal protein uS19 family.

Functionally, protein S19 forms a complex with S13 that binds strongly to the 16S ribosomal RNA. In Klebsiella pneumoniae (strain 342), this protein is Small ribosomal subunit protein uS19.